The primary structure comprises 526 residues: uncharacterized protein (526 aa).

2 WD repeats span residues 210–248 (SMEQYINSIAISPNKKYIALATTCGLIIYNLIDKTHHDT) and 452–491 (SHNSCVTSIAISSNNKMILTAGLDGLLKLWNSKTLNLIDS).

This is an uncharacterized protein from Acanthamoeba polyphaga mimivirus (APMV).